Reading from the N-terminus, the 351-residue chain is Holliday junction branch migration complex subunit RuvB (351 aa).

The large ATPase domain (RuvB-L) stretch occupies residues 1–186 (MDEKIETRLI…FGIVQRLEFY (186 aa)). ATP contacts are provided by residues Ile25, Arg26, Gly67, Lys70, Thr71, Thr72, 133-135 (EDF), Arg176, Tyr186, and Arg223. Thr71 provides a ligand contact to Mg(2+). Residues 187–257 (RIPDLIHIVK…IAKEALDLLN (71 aa)) form a small ATPAse domain (RuvB-S) region. The segment at 260 to 351 (IRGLDVMDRK…ENFDLLGKVE (92 aa)) is head domain (RuvB-H). Arg296, Arg315, and Arg320 together coordinate DNA.

Belongs to the RuvB family. As to quaternary structure, homohexamer. Forms an RuvA(8)-RuvB(12)-Holliday junction (HJ) complex. HJ DNA is sandwiched between 2 RuvA tetramers; dsDNA enters through RuvA and exits via RuvB. An RuvB hexamer assembles on each DNA strand where it exits the tetramer. Each RuvB hexamer is contacted by two RuvA subunits (via domain III) on 2 adjacent RuvB subunits; this complex drives branch migration. In the full resolvosome a probable DNA-RuvA(4)-RuvB(12)-RuvC(2) complex forms which resolves the HJ.

Its subcellular location is the cytoplasm. The catalysed reaction is ATP + H2O = ADP + phosphate + H(+). Its function is as follows. The RuvA-RuvB-RuvC complex processes Holliday junction (HJ) DNA during genetic recombination and DNA repair, while the RuvA-RuvB complex plays an important role in the rescue of blocked DNA replication forks via replication fork reversal (RFR). RuvA specifically binds to HJ cruciform DNA, conferring on it an open structure. The RuvB hexamer acts as an ATP-dependent pump, pulling dsDNA into and through the RuvAB complex. RuvB forms 2 homohexamers on either side of HJ DNA bound by 1 or 2 RuvA tetramers; 4 subunits per hexamer contact DNA at a time. Coordinated motions by a converter formed by DNA-disengaged RuvB subunits stimulates ATP hydrolysis and nucleotide exchange. Immobilization of the converter enables RuvB to convert the ATP-contained energy into a lever motion, pulling 2 nucleotides of DNA out of the RuvA tetramer per ATP hydrolyzed, thus driving DNA branch migration. The RuvB motors rotate together with the DNA substrate, which together with the progressing nucleotide cycle form the mechanistic basis for DNA recombination by continuous HJ branch migration. Branch migration allows RuvC to scan DNA until it finds its consensus sequence, where it cleaves and resolves cruciform DNA. The polypeptide is Holliday junction branch migration complex subunit RuvB (Coxiella burnetii (strain CbuG_Q212) (Coxiella burnetii (strain Q212))).